Here is a 98-residue protein sequence, read N- to C-terminus: Citrate lyase acyl carrier protein (98 aa).

An O-(phosphoribosyl dephospho-coenzyme A)serine modification is found at Ser-14.

It belongs to the CitD family. In terms of assembly, oligomer with a subunit composition of (alpha,beta,gamma)6.

Its subcellular location is the cytoplasm. In terms of biological role, covalent carrier of the coenzyme of citrate lyase. This Shigella boydii serotype 18 (strain CDC 3083-94 / BS512) protein is Citrate lyase acyl carrier protein.